The primary structure comprises 311 residues: Olfactory receptor 2M4 (311 aa).

At 1–25 (MVWENQTFNSIFILLGIFNHSPTHT) the chain is on the extracellular side. Asn5 carries N-linked (GlcNAc...) asparagine glycosylation. Residues 26-49 (FLFSLVLGIFSLALMENISMVLLI) traverse the membrane as a helical segment. Residues 50 to 57 (YIEKQLHT) are Cytoplasmic-facing. The helical transmembrane segment at 58-79 (PMYFLLSQLSLMDLMLICTTLP) threads the bilayer. Topologically, residues 80-100 (KMIFSYLSGKKSISLAGCGTQ) are extracellular. Cys97 and Cys189 are joined by a disulfide. Residues 101–120 (IFFYVSLLGAECFLLAVMAY) form a helical membrane-spanning segment. Over 121–139 (DRYVAICHPLQYTILMNPK) the chain is Cytoplasmic. The chain crosses the membrane as a helical span at residues 140-158 (LCVFMTVASWTLGSLDGII). Residues 159-195 (VLAAVLSFSYCSSLEIHHFFCDVAALLPLSCTETSAF) lie on the Extracellular side of the membrane. The helical transmembrane segment at 196–219 (ERLLVICCVVMLIFPVSVIILSYS) threads the bilayer. Residues 220–236 (HVLRAVIHMGSGESRRK) are Cytoplasmic-facing. A helical transmembrane segment spans residues 237 to 259 (AFTTCSSHLSVVGLYYGAAMFMY). Over 260-272 (MRPASKHTPDQDK) the chain is Extracellular. The helical transmembrane segment at 273 to 292 (MVSAFYTILTPMLNPLIYSL) threads the bilayer. Residues 293 to 311 (RNKEVFRALQKVLKKRKLI) are Cytoplasmic-facing.

The protein belongs to the G-protein coupled receptor 1 family.

It is found in the cell membrane. Functionally, odorant receptor. The polypeptide is Olfactory receptor 2M4 (OR2M4) (Homo sapiens (Human)).